The primary structure comprises 821 residues: Condensin-2 complex subunit kle-2 (821 aa).

A disordered region spans residues valine 389–isoleucine 426. Positions aspartate 409–aspartate 424 are enriched in acidic residues. A coiled-coil region spans residues threonine 529–arginine 561.

The protein belongs to the CND2 H2 (condensin-2 subunit 2) family. In terms of assembly, component of the condensin II complex, which contains the mix-1/SMC2 and smc-4/SMC4 heterodimer, and three non SMC subunits, capg-2, kle-2 and hcp-6 that probably regulate the complex. Within the complex, interacts with mix-1, smc-4, capg-2 and hcp-6.

The protein localises to the nucleus. Its subcellular location is the chromosome. It localises to the centromere. Its function is as follows. Regulatory subunit of the condensin II complex, a complex that seems to play a role in prophase chromosome condensation and in chromosome segregation in mitosis and in meiosis. This Caenorhabditis elegans protein is Condensin-2 complex subunit kle-2 (kle-2).